The sequence spans 296 residues: Large ribosomal subunit protein uL29m (296 aa).

The N-terminal 19 residues, 1–19 (MSITSIRALLRSAVSLART), are a transit peptide targeting the mitochondrion.

Belongs to the universal ribosomal protein uL29 family. Component of the mitochondrial large ribosomal subunit. Mature mitochondrial ribosomes consist of a small (37S) and a large (54S) subunit. The 37S subunit contains at least 33 different proteins and 1 molecule of RNA (15S). The 54S subunit contains at least 45 different proteins and 1 molecule of RNA (21S).

The protein resides in the mitochondrion. The sequence is that of Large ribosomal subunit protein uL29m (MRPL4) from Lodderomyces elongisporus (strain ATCC 11503 / CBS 2605 / JCM 1781 / NBRC 1676 / NRRL YB-4239) (Yeast).